The sequence spans 317 residues: Hairy/enhancer-of-split related with YRPW motif protein 1 (317 aa).

The segment at 1 to 59 (MKRNHDFSSSDSELDENIEVEKESADENAGANSPLGSMSPSTTSQVQARKRRRGIIEKR) is disordered. Residues 30–47 (GANSPLGSMSPSTTSQVQ) are compositionally biased toward polar residues. Positions 48 to 103 (ARKRRRGIIEKRRRDRINNSLSELRRLVPSAFEKQGSAKLEKAEILQMTVDHLKML) constitute a bHLH domain. The 37-residue stretch at 121–157 (YRGLGFRECLAETARYLSIIEGLDNTDPLRIRLVSHL) folds into the Orange domain. 2 stretches are compositionally biased toward low complexity: residues 193–226 (QQQQ…SAPS) and 248–264 (PPST…TASK). Residues 193 to 264 (QQQQQQGAPL…PGLTPPTASK (72 aa)) form a disordered region. The short motif at 307–310 (YRPW) is the YRPW motif element.

It belongs to the HEY family.

The protein resides in the nucleus. In terms of biological role, transcriptional repressor which functions as a downstream effector of Notch signaling. The chain is Hairy/enhancer-of-split related with YRPW motif protein 1 (hey1) from Danio rerio (Zebrafish).